The following is a 269-amino-acid chain: UPF0162 protein YchA (269 aa).

This sequence belongs to the UPF0162 family.

The protein is UPF0162 protein YchA (ychA) of Escherichia coli O157:H7.